We begin with the raw amino-acid sequence, 204 residues long: Urease accessory protein UreG (204 aa).

Residue 11 to 18 participates in GTP binding; the sequence is GPVGAGKT.

This sequence belongs to the SIMIBI class G3E GTPase family. UreG subfamily. As to quaternary structure, homodimer. UreD, UreF and UreG form a complex that acts as a GTP-hydrolysis-dependent molecular chaperone, activating the urease apoprotein by helping to assemble the nickel containing metallocenter of UreC. The UreE protein probably delivers the nickel.

It is found in the cytoplasm. Functionally, facilitates the functional incorporation of the urease nickel metallocenter. This process requires GTP hydrolysis, probably effectuated by UreG. The protein is Urease accessory protein UreG of Staphylococcus aureus (strain MSSA476).